The following is a 308-amino-acid chain: Probable manganese-dependent inorganic pyrophosphatase (308 aa).

Residues His-9, Asp-13, Asp-15, Asp-75, His-97, and Asp-149 each coordinate Mn(2+).

This sequence belongs to the PPase class C family. Mn(2+) serves as cofactor.

The protein resides in the cytoplasm. The enzyme catalyses diphosphate + H2O = 2 phosphate + H(+). The chain is Probable manganese-dependent inorganic pyrophosphatase from Staphylococcus carnosus (strain TM300).